The sequence spans 519 residues: MTSTFNPRECKLSKQEGQNYGFFLRIEKDTEGHLVRVVEKCSPAEKAGLQDGDRVLRINGVFVDKEEHMQVVDLVRKSGNSVTLLVLDGDSYEKAVKTRVDLKELGQSQKEQGLSDNILSPVMNGGVQTWTQPRLCYLVKEGGSYGFSLKTVQGKKGVYMTDITPQGVAMRAGVLADDHLIEVNGENVEDASHEEVVEKVKKSGSRVMFLLVDKETDKRHVEQKIQFKRETASLKLLPHQPRIVEMKKGSNGYGFYLRAGSEQKGQIIKDIDSGSPAEEAGLKNNDLVVAVNGESVETLDHDSVVEMIRKGGDQTSLLVVDKETDNMYRLAHFSPFLYYQSQELPNGSVKEAPAPTPTSLEVSSPPDTTEEVDHKPKLCRLAKGENGYGFHLNAIRGLPGSFIKEVQKGGPADLAGLEDEDVIIEVNGVNVLDEPYEKVVDRIQSSGKNVTLLVCGKKAYDYFQAKKIPIVSSLADPLDTPPDSKEGIVVESNHDSHMAKERAHSTASHSSSNSEDTEM.

The region spanning 9–90 is the PDZ 1 domain; the sequence is ECKLSKQEGQ…SVTLLVLDGD (82 aa). 6 positions are modified to phosphoserine: Ser-108, Ser-148, Ser-192, Ser-250, Ser-334, and Ser-348. PDZ domains lie at 134–215 and 243–323; these read RLCY…VDKE and IVEM…VDKE. The segment at 347–374 is disordered; sequence GSVKEAPAPTPTSLEVSSPPDTTEEVDH. Residues 357 to 367 show a composition bias toward polar residues; sequence PTSLEVSSPPD. A PDZ 4 domain is found at 378 to 458; that stretch reads LCRLAKGENG…NVTLLVCGKK (81 aa). The residue at position 451 (Thr-451) is a Phosphothreonine. The segment at 479–519 is disordered; the sequence is DTPPDSKEGIVVESNHDSHMAKERAHSTASHSSSNSEDTEM. Basic and acidic residues predominate over residues 482–504; that stretch reads PDSKEGIVVESNHDSHMAKERAH. 6 positions are modified to phosphoserine: Ser-492, Ser-508, Ser-510, Ser-511, Ser-512, and Ser-514. Residues 505–519 are compositionally biased toward low complexity; it reads STASHSSSNSEDTEM.

The protein belongs to the NHER family. As to quaternary structure, interacts with PDZK1IP1 and ABCC2. Interacts (via PDZ domains 1 and 3) with SCARB1 (C-terminal domain). Forms a heterodimeric complex with NHERF1. Interacts with AKAP2, BCR, CFTR, SLC22A12, SLC22A4, SLC22A5, NHERF2 and SLC17A1. Component of a complex, composed of PDZK1, SYNGAP1, KLHL17 and NMDA receptors. Interacts (via PDZ1 domain) directly with KLHL17; the interaction is important for integrity of actin cytoskeleton structures in neurons. Interacts (via the first PDZ domain) with PTGIR (via non-isoprenylated C-terminus). Interacts (via C-terminal PDZ domain) with SLC26A6 (via C-terminal domain). Interacts (via C-terminal PDZ domain) with SLC9A3 (via C-terminal domain). Interacts (via PDZ domains 1 and 3) with SLC5A8 (via PDZ-binding motif); interaction increases nicotinate transport activity of SLC5A8. In terms of tissue distribution, expression is limited to epithelial cells. Expressed in the kidney (brush border of proximal tubule), pancreas, liver, and small intestine. Expressed at a lower level in the adrenal cortex, testis and stomach. Overexpressed in breast, renal and lung carcinomas.

The protein localises to the membrane. It localises to the cell membrane. A scaffold protein that connects plasma membrane proteins and regulatory components, regulating their surface expression in epithelial cells apical domains. May be involved in the coordination of a diverse range of regulatory processes for ion transport and second messenger cascades. In complex with NHERF1, may cluster proteins that are functionally dependent in a mutual fashion and modulate the trafficking and the activity of the associated membrane proteins. May play a role in the cellular mechanisms associated with multidrug resistance through its interaction with ABCC2 and PDZK1IP1. May potentiate the CFTR chloride channel activity. Required for normal cell-surface expression of SCARB1. Plays a role in maintaining normal plasma cholesterol levels via its effects on SCARB1. Plays a role in the normal localization and function of the chloride-anion exchanger SLC26A6 to the plasma membrane in the brush border of the proximal tubule of the kidney. May be involved in the regulation of proximal tubular Na(+)-dependent inorganic phosphate cotransport therefore playing an important role in tubule function. The polypeptide is Na(+)/H(+) exchange regulatory cofactor NHE-RF3 (PDZK1) (Homo sapiens (Human)).